A 342-amino-acid polypeptide reads, in one-letter code: MNTNNFDFELPEELIAQTPLEKRDSSKLLIIDHRQKTMVDSHFDHIIDQLNPGDALVMNNTRVLPARLYGEKPDTHGHVELLLLKNTQGDQWEVLAKPAKRLKVGSQVNFGDGRLKATIIDELEHGGRIVEFSYDGIFLEVLESLGEMPLPPYIHEKLEDAERYQTVYAKENGSAAAPTAGLHFTTDLLKKIEAKGVHLVYLTLHVGLGTFRPVSVDNLDEHDMHSEFYSLSEEAAQTLRDVKQAGGRVVAVGTTSIRTLETIGGKFQGDIQADSGWTNIFIKPGYQFKVVDAFSTNFHLPKSTLVMLVSAFAGRDFVLEAYRHAVDEKYRFFSFGDAMFVN.

The protein belongs to the QueA family. In terms of assembly, monomer.

It localises to the cytoplasm. The enzyme catalyses 7-aminomethyl-7-carbaguanosine(34) in tRNA + S-adenosyl-L-methionine = epoxyqueuosine(34) in tRNA + adenine + L-methionine + 2 H(+). Its pathway is tRNA modification; tRNA-queuosine biosynthesis. Functionally, transfers and isomerizes the ribose moiety from AdoMet to the 7-aminomethyl group of 7-deazaguanine (preQ1-tRNA) to give epoxyqueuosine (oQ-tRNA). This chain is S-adenosylmethionine:tRNA ribosyltransferase-isomerase, found in Streptococcus pyogenes serotype M1.